The following is a 145-amino-acid chain: Small ribosomal subunit protein uS19 (145 aa).

Belongs to the universal ribosomal protein uS19 family. Component of the small ribosomal subunit.

Its subcellular location is the cytoplasm. Component of the small ribosomal subunit. The ribosome is a large ribonucleoprotein complex responsible for the synthesis of proteins in the cell. This Xenopus laevis (African clawed frog) protein is Small ribosomal subunit protein uS19 (rps15).